The primary structure comprises 320 residues: Lipoyl synthase (320 aa).

Positions 1-29 (MVTVVDRVTNRRLRHPEKAHRPDTSVQKK) are disordered. Residues 19–29 (AHRPDTSVQKK) show a composition bias toward basic and acidic residues. [4Fe-4S] cluster is bound by residues Cys-59, Cys-64, Cys-70, Cys-85, Cys-89, Cys-92, and Ser-298. Positions 71–287 (WSQRHASFMI…AKIGKVKGFL (217 aa)) constitute a Radical SAM core domain.

This sequence belongs to the radical SAM superfamily. Lipoyl synthase family. Requires [4Fe-4S] cluster as cofactor.

The protein resides in the cytoplasm. It carries out the reaction [[Fe-S] cluster scaffold protein carrying a second [4Fe-4S](2+) cluster] + N(6)-octanoyl-L-lysyl-[protein] + 2 oxidized [2Fe-2S]-[ferredoxin] + 2 S-adenosyl-L-methionine + 4 H(+) = [[Fe-S] cluster scaffold protein] + N(6)-[(R)-dihydrolipoyl]-L-lysyl-[protein] + 4 Fe(3+) + 2 hydrogen sulfide + 2 5'-deoxyadenosine + 2 L-methionine + 2 reduced [2Fe-2S]-[ferredoxin]. It participates in protein modification; protein lipoylation via endogenous pathway; protein N(6)-(lipoyl)lysine from octanoyl-[acyl-carrier-protein]: step 2/2. Its function is as follows. Catalyzes the radical-mediated insertion of two sulfur atoms into the C-6 and C-8 positions of the octanoyl moiety bound to the lipoyl domains of lipoate-dependent enzymes, thereby converting the octanoylated domains into lipoylated derivatives. This Bartonella tribocorum (strain CIP 105476 / IBS 506) protein is Lipoyl synthase.